A 228-amino-acid chain; its full sequence is Cytidylate kinase (228 aa).

11–19 is a binding site for ATP; the sequence is GPASAGKST.

This sequence belongs to the cytidylate kinase family. Type 1 subfamily.

It is found in the cytoplasm. The catalysed reaction is CMP + ATP = CDP + ADP. The enzyme catalyses dCMP + ATP = dCDP + ADP. This is Cytidylate kinase from Limosilactobacillus reuteri (strain DSM 20016) (Lactobacillus reuteri).